The following is a 70-amino-acid chain: Ranatuerin-2SN1 (70 aa).

The signal sequence occupies residues 1–22 (MFTLKKSLLLIFFLGTISLSLC). Positions 23–40 (EKERDADDDEVEVIKQEE) are cleaved as a propeptide — removed in mature form. A disulfide bridge connects residues Cys65 and Cys70.

It belongs to the frog skin active peptide (FSAP) family. Ranatuerin subfamily. Expressed by the skin glands.

It is found in the secreted. In terms of biological role, antimicrobial peptide. Weakly active against P.faecalis X29. Not active against fungi. Shows very weak hemolytic activity against human erythrocytes. The polypeptide is Ranatuerin-2SN1 (Sylvirana spinulosa (Fine-spined frog)).